A 1178-amino-acid polypeptide reads, in one-letter code: Ubiquitin carboxyl-terminal hydrolase cyk-3 (1178 aa).

3 EF-hand domains span residues 28 to 60, 175 to 210, and 211 to 246; these read EEYR…GAQI, FPDS…LCRG, and PLPG…LNVP. Ca(2+) is bound by residues Asp-188, Asn-190, Asp-192, Gln-194, Glu-199, Asp-224, Asp-226, Asp-228, and Glu-235. In terms of domain architecture, DUSP spans 296–410; it reads ESRKMELQIV…VDSQFTRKYL (115 aa). The USP domain maps to 570-1175; it reads VGLVNYGNFC…GAYLLFYERK (606 aa). Cys-579 serves as the catalytic Nucleophile. The interval 681 to 725 is disordered; the sequence is SNKSLHPSPEESEGTDSNKLSDSSKKKEADKEEADEEKAERSWTE. His-1134 functions as the Proton acceptor in the catalytic mechanism.

The protein belongs to the peptidase C19 family. In terms of tissue distribution, expressed in excretory cells, coelomocytes, head neurons, hypodermal cells, germ cells, oocytes, sperm and pharynx (at protein level).

The protein resides in the nucleus. Its subcellular location is the cytoplasm. It is found in the cytoskeleton. It localises to the microtubule organizing center. The catalysed reaction is Thiol-dependent hydrolysis of ester, thioester, amide, peptide and isopeptide bonds formed by the C-terminal Gly of ubiquitin (a 76-residue protein attached to proteins as an intracellular targeting signal).. Functionally, ubiquitin-protein hydrolase which cleaves ubiquitin from ubiquitinated proteins. Plays a role in embryo osmoregulation. Probably by regulating osmosis, controls actin redistribution in the 1-cell embryos and thus actin-dependent processes such as cytokinesis and P-granules segregation. During the first embryonic mitotic division, involved in the formation of a functional microtubule organizing center provided by the male pronucleus. Acts as a positive regulator of the mTORC1 signaling. The chain is Ubiquitin carboxyl-terminal hydrolase cyk-3 from Caenorhabditis elegans.